We begin with the raw amino-acid sequence, 214 residues long: tRNA (guanine-N(7)-)-methyltransferase (214 aa).

Residues Asp35, Glu60, Asn87, and Asp113 each contribute to the S-adenosyl-L-methionine site. Asp113 is a catalytic residue. Positions 117 and 149 each coordinate substrate.

It belongs to the class I-like SAM-binding methyltransferase superfamily. TrmB family.

It catalyses the reaction guanosine(46) in tRNA + S-adenosyl-L-methionine = N(7)-methylguanosine(46) in tRNA + S-adenosyl-L-homocysteine. Its pathway is tRNA modification; N(7)-methylguanine-tRNA biosynthesis. Catalyzes the formation of N(7)-methylguanine at position 46 (m7G46) in tRNA. This is tRNA (guanine-N(7)-)-methyltransferase from Prochlorococcus marinus (strain NATL2A).